A 479-amino-acid polypeptide reads, in one-letter code: Anaerobic nitric oxide reductase flavorubredoxin (479 aa).

The segment at 30 to 210 (LRGSSYNSYL…PFSRLVTPKI (181 aa)) is zinc metallo-hydrolase. Fe cation-binding residues include H79, E81, D83, H147, D166, and H227. The Flavodoxin-like domain maps to 254–393 (ITIFYDTMSN…LCREHGREIA (140 aa)). FMN is bound by residues 260–264 (TMSNN) and 342–369 (AFGSHGWSGGAVDRLSTRLQDAGFEMSL). One can recognise a Rubredoxin-like domain in the interval 423-479 (GPRMQCSVCQWIYDPAKGEPMQDVAPGTPWSEVPDNFLCPECSLGKDVFEELASEAK). 4 residues coordinate Fe cation: C428, C431, C461, and C464.

This sequence in the N-terminal section; belongs to the zinc metallo-hydrolase group 3 family. In terms of assembly, homotetramer. Requires Fe cation as cofactor. FMN is required as a cofactor.

It localises to the cytoplasm. The protein operates within nitrogen metabolism; nitric oxide reduction. In terms of biological role, anaerobic nitric oxide reductase; uses NADH to detoxify nitric oxide (NO), protecting several 4Fe-4S NO-sensitive enzymes. Has at least 2 reductase partners, only one of which (NorW, flavorubredoxin reductase) has been identified. NO probably binds to the di-iron center; electrons enter from the reductase at rubredoxin and are transferred sequentially to the FMN center and the di-iron center. Also able to function as an aerobic oxygen reductase. The polypeptide is Anaerobic nitric oxide reductase flavorubredoxin (norV) (Escherichia coli (strain K12 / DH10B)).